A 91-amino-acid polypeptide reads, in one-letter code: Large ribosomal subunit protein bL31B (91 aa).

The protein belongs to the bacterial ribosomal protein bL31 family. Type B subfamily. As to quaternary structure, part of the 50S ribosomal subunit.

The chain is Large ribosomal subunit protein bL31B from Neisseria gonorrhoeae (strain ATCC 700825 / FA 1090).